The primary structure comprises 624 residues: LEAF RUST 10 DISEASE-RESISTANCE LOCUS RECEPTOR-LIKE PROTEIN KINASE-like 2.2 (624 aa).

Residues 1–30 (MDYLSSMGSQTARFCLILLFLFYYLPCALS) form the signal peptide. At 31-263 (QDDLWGCGTP…IPNTRSILIT (233 aa)) the chain is on the extracellular side. 6 N-linked (GlcNAc...) asparagine glycosylation sites follow: asparagine 45, asparagine 75, asparagine 85, asparagine 95, asparagine 150, and asparagine 164. A helical transmembrane segment spans residues 264–284 (IGQVVGFHVFIIVVMIIAFLF). The Cytoplasmic portion of the chain corresponds to 285 to 624 (WRRKKVNDLR…EEDSSIYSEV (340 aa)). A Protein kinase domain is found at 317 to 599 (KSFTEVVGRG…SLDPPPKPLL (283 aa)). Residues 323 to 331 (VGRGGFGTV) and lysine 345 each bind ATP. The active-site Proton acceptor is the aspartate 434. The segment at 587–624 (NLDSLDPPPKPLLHMPMQNNNAESSQPSEEDSSIYSEV) is disordered. Positions 603–624 (MQNNNAESSQPSEEDSSIYSEV) are enriched in polar residues.

Belongs to the protein kinase superfamily. Ser/Thr protein kinase family.

Its subcellular location is the membrane. It carries out the reaction L-seryl-[protein] + ATP = O-phospho-L-seryl-[protein] + ADP + H(+). The catalysed reaction is L-threonyl-[protein] + ATP = O-phospho-L-threonyl-[protein] + ADP + H(+). This is LEAF RUST 10 DISEASE-RESISTANCE LOCUS RECEPTOR-LIKE PROTEIN KINASE-like 2.2 from Arabidopsis thaliana (Mouse-ear cress).